The following is a 2737-amino-acid chain: Non-reducing polyketide synthase ATEG_07661 (2737 aa).

The interval 75–245 is N-terminal acylcarrier protein transacylase domain (SAT); it reads SRSLAELDSW…VRYDQTRATV (171 aa). The active-site Nucleophile; for transacylase activity is C154. H276 serves as the catalytic Proton donor/acceptor; for transacylase activity. Positions 427 to 854 constitute a Ketosynthase family 3 (KS3) domain; the sequence is NEAIAIVGMS…GSNASMIITE (428 aa). Active-site for beta-ketoacyl synthase activity residues include C603, H738, and H777. The malonyl-CoA:ACP transacylase (MAT) stretch occupies residues 969-1260; sequence FGGQVSRFVG…IMASRAIAQS (292 aa). The tract at residues 1368-1503 is N-terminal hotdog fold; the sequence is LQSLWNFVEF…ASVEMRAPTD (136 aa). A PKS/mFAS DH domain is found at 1368 to 1683; sequence LQSLWNFVEF…YGRVAKASMS (316 aa). Residues 1399 to 1681 are product template (PT) domain; the sequence is FVLSHVIAQT…VQYGRVAKAS (283 aa). The active-site Proton acceptor; for dehydratase activity is H1403. Residues 1535 to 1683 form a C-terminal hotdog fold region; it reads VEVLQGRNVY…YGRVAKASMS (149 aa). D1592 (proton donor; for dehydratase activity) is an active-site residue. Residues 1724–1747 form a disordered region; the sequence is SRTTKKKAKASKSKSSVKKDKAPS. Positions 1725 to 1739 are enriched in basic residues; sequence RTTKKKAKASKSKSS. One can recognise a Carrier domain in the interval 1750–1824; that stretch reads RDITDEVRNL…KFVACVSNAL (75 aa). The residue at position 1784 (S1784) is an O-(pantetheine 4'-phosphoryl)serine. The interval 1827–1876 is disordered; it reads PNQGQSSIDEDDEDDEHSEDSSNESSSAASDEDASSGLESPDTGILTPED. Over residues 1834-1848 the composition is skewed to acidic residues; that stretch reads IDEDDEDDEHSEDSS. Residues 1849–1866 are compositionally biased toward low complexity; the sequence is NESSSAASDEDASSGLES. The methyltransferase domain stretch occupies residues 2094–2270; sequence ADRIQSSSGS…GFGHVDWTDG (177 aa). An NADPH-binding domain region spans residues 2362–2665; the sequence is VVLVTGATGS…IPFKDWISRV (304 aa).

It functions in the pathway secondary metabolite biosynthesis. Functionally, non-reducing polyketide synthase; part of the cluster B that mediates the biosynthesis of azasperpyranones, members of the azaphilone family that exhibit anti-cancer activities. Azasperpyranones are synthesized by 2 clusters, A and B. Cluster A is responsible for the production of the polyhydric phenol moiety while the azaphilonoid scaffold is produced by the cluster B. The non-reducing polyketide synthase ATEG_03629 produces 5-methyl orsellinic acid, which is then reduced to 5-methyl orsellinic aldehyde by the NRPS-like protein ATEG_03630. 5-methyl orsellinic aldehyde is then first hydroxylated by the FAD-dependent monooxygenase ATEG_03635 and subsequently hydroxylated by the cytochrome P450 monooxygenase ATEG_03631 to produce the unstable polyhydric phenol precursor of azasperpyranones. On the other hand, the polyketide synthase ATEG_07659 is responsible for producing the 3,5-dimethyloctadienone moiety from acetyl-CoA, three malonyl-CoA, and two S-adenosyl methionines (SAM). The 3,5-dimethyloctadienone moiety is then loaded onto the SAT domain of ATEG_07661 and extended with four malonyl-CoA and one SAM, which leads to the formation of 2,4-dihydroxy-6-(5,7-dimethyl-2-oxo-trans-3-trans-5-nonadienyl)-3-methylbenzaldehyde (compound 8) after reductive release and aldol condensation. The FAD-dependent monooxygenase ATEG_07662 is the next enzyme in the biosynthesis sequence and hydroxylates the side chain at the benzylic position of compound 8. In Aspergillus nidulans, afoF, the ortholog of the FAD-dependent oxygenase ATEG_07660, is the key enzyme for the biosynthesis of asperfuranone by catalyzing the hydroxylation at C-8 of to prevent the formation of a six-membered ring hemiacetal intermediate and thus facilitating the formation of a five-membered ring to produce asperfuranone. In Aspergillus terreus, ATEG_07660 is probably not functional, which leads to the formation of the six-membered ring hemiacetal intermediate presperpyranone instead of asperfuranone. Finally, ATEG_03636 is involved in the condensation of the polyhydric phenol moiety produced by cluster A and the perasperpyranone precursor produced by cluster B, to yield azasperpyranone A. Further modifications of azasperpyranone A result in the production of derivatives, including azasperpyranone B to F. The protein is Non-reducing polyketide synthase ATEG_07661 of Aspergillus terreus (strain NIH 2624 / FGSC A1156).